The chain runs to 175 residues: Regenerating islet-derived protein 3-alpha (175 aa).

An N-terminal signal peptide occupies residues 1-26 (MLPHLVLNSISWMLLSCLLFVFQVQG). Residues 27 to 37 (EDFQKEVPSPR) constitute a propeptide that is removed on maturation. 3 cysteine pairs are disulfide-bonded: C40/C51, C68/C171, and C146/C163. The C-type lectin domain occupies 47–172 (YRSHCYALVM…CDGTLPFVCK (126 aa)). Residues H50, H107, E121, and H145 each coordinate Zn(2+). The tract at residues 103–118 (WIGLHDPTMGQQPNGG) is sufficient to activate EXTL3.

In terms of assembly, forms a hexameric membrane-permeabilizing oligomeric pore on membrane phospholipids. The hexamer is formed by three dimers related by helical symmetry. Forms filaments, filamentation traps pore complexes and limits damage to host cells. Interacts with EXTL3. In terms of processing, proteolytic processing by trypsin removes an inhibitory N-terminal propeptide and is essential for peptidoglycan binding and antibacterial activity. In terms of tissue distribution, small intestine and pancreas.

The protein localises to the secreted. Bactericidal C-type lectin. The lack of the EPN motif may explain its inability to bind peptidoglycan. In terms of biological role, acts as a hormone in response to different stimuli like anti-inflammatory signals, such as IL17A, or gut microbiome. Secreted by different cell types to activate its receptor EXTL3 and induce cell specific signaling pathways. Induced by IL17A in keratinocytes, regulates keratinocyte proliferation and differentiation after skin injury via activation of EXTL3-PI3K-AKT signaling pathway. In parallel, inhibits skin inflammation through the inhibition of inflammatory cytokines such as IL6 and TNF. In pancreas, is able to permealize beta-cells membrane and stimulate their proliferation. The sequence is that of Regenerating islet-derived protein 3-alpha (Reg3a) from Mus musculus (Mouse).